Reading from the N-terminus, the 471-residue chain is Glutamate--tRNA ligase 2 (471 aa).

The 'HIGH' region motif lies at 15–25 (PSPTGYLHIGG). Positions 243 to 247 (KLSKR) match the 'KMSKS' region motif. Lys-246 serves as a coordination point for ATP.

This sequence belongs to the class-I aminoacyl-tRNA synthetase family. Glutamate--tRNA ligase type 1 subfamily. Monomer.

Its subcellular location is the cytoplasm. It carries out the reaction tRNA(Glu) + L-glutamate + ATP = L-glutamyl-tRNA(Glu) + AMP + diphosphate. Catalyzes the attachment of glutamate to tRNA(Glu) in a two-step reaction: glutamate is first activated by ATP to form Glu-AMP and then transferred to the acceptor end of tRNA(Glu). The sequence is that of Glutamate--tRNA ligase 2 from Cereibacter sphaeroides (strain ATCC 17025 / ATH 2.4.3) (Rhodobacter sphaeroides).